Here is a 145-residue protein sequence, read N- to C-terminus: Large ribosomal subunit protein uL15 (145 aa).

Positions 1–43 (MRLNTIKPGAGSKSAAKRVGRGIGSGLGKTCGRGHKGQKSRAG) are disordered. Over residues 21-31 (RGIGSGLGKTC) the composition is skewed to gly residues.

This sequence belongs to the universal ribosomal protein uL15 family. Part of the 50S ribosomal subunit.

Binds to the 23S rRNA. The chain is Large ribosomal subunit protein uL15 from Aromatoleum aromaticum (strain DSM 19018 / LMG 30748 / EbN1) (Azoarcus sp. (strain EbN1)).